The primary structure comprises 73 residues: Translational regulator CsrA (73 aa).

Belongs to the CsrA/RsmA family. In terms of assembly, homodimer; the beta-strands of each monomer intercalate to form a hydrophobic core, while the alpha-helices form wings that extend away from the core.

The protein localises to the cytoplasm. Functionally, a translational regulator that binds mRNA to regulate translation initiation and/or mRNA stability. Usually binds in the 5'-UTR at or near the Shine-Dalgarno sequence preventing ribosome-binding, thus repressing translation. Its main target seems to be the major flagellin gene, while its function is anatagonized by FliW. This Lachnospira eligens (strain ATCC 27750 / DSM 3376 / VPI C15-48 / C15-B4) (Eubacterium eligens) protein is Translational regulator CsrA.